The following is a 203-amino-acid chain: Mitotic spindle assembly checkpoint protein MAD2A (203 aa).

Residues 14 to 196 (KGSTEIVTEF…TTIHKVESMV (183 aa)) enclose the HORMA domain. Residues 194-203 (SMVAYKISND) are required for assuming the closed conformation and for interaction with cdc20.

The protein belongs to the MAD2 family. As to quaternary structure, interacts with cdc20.

The protein localises to the nucleus. The protein resides in the chromosome. Its subcellular location is the centromere. It is found in the kinetochore. It localises to the cytoplasm. In terms of biological role, component of the spindle-assembly checkpoint that prevents the onset of anaphase until all chromosomes are properly aligned at the metaphase plate. Required for the execution of the mitotic checkpoint which monitors the process of kinetochore-spindle attachment and inhibits the activity of the anaphase promoting complex until all chromosomes are aligned at the metaphase plate. This chain is Mitotic spindle assembly checkpoint protein MAD2A (mad2l1-1), found in Dictyostelium discoideum (Social amoeba).